The chain runs to 859 residues: Active breakpoint cluster region-related protein (859 aa).

A disordered region spans residues 26-84; it reads TDEYDGEGNEEQKGPPEGSETMPYIDESPTMSPQLSARSQGGGDGVSPTPPEGLAPGVE. Residues 54-64 are compositionally biased toward polar residues; sequence PTMSPQLSARS. Ser-57 carries the phosphoserine modification. A DH domain is found at 91–284; that stretch reads MRKLVLSGFL…QNFLSSINED (194 aa). Positions 301–459 constitute a PH domain; that stretch reads QLVKDGFLVE…WREAIQKLQK (159 aa). A C2 domain is found at 484-613; the sequence is TVHNIPVTSN…ETKNWHTDVI (130 aa). The Rho-GAP domain maps to 647 to 845; that stretch reads VKISVVTKRE…YYLQHPPISF (199 aa).

In terms of assembly, interacts with DLG4. Highly enriched in the brain. Much weaker expression in heart, lung and muscle.

It localises to the cell projection. The protein resides in the dendritic spine. It is found in the axon. Its subcellular location is the synapse. Functionally, protein with a unique structure having two opposing regulatory activities toward small GTP-binding proteins. The C-terminus is a GTPase-activating protein domain which stimulates GTP hydrolysis by RAC1, RAC2 and CDC42. Accelerates the intrinsic rate of GTP hydrolysis of RAC1 or CDC42, leading to down-regulation of the active GTP-bound form. The central Dbl homology (DH) domain functions as a guanine nucleotide exchange factor (GEF) that modulates the GTPases CDC42, RHOA and RAC1. Promotes the conversion of CDC42, RHOA and RAC1 from the GDP-bound to the GTP-bound form. Functions as an important negative regulator of neuronal RAC1 activity. Regulates macrophage functions such as CSF-1 directed motility and phagocytosis through the modulation of RAC1 activity. In Homo sapiens (Human), this protein is Active breakpoint cluster region-related protein.